The sequence spans 311 residues: Purine nucleoside phosphorylase (311 aa).

Ser2 is modified (N-acetylserine). Phosphate-binding positions include Ser46, His81, 101 to 103, and Ala134; that span reads RLH. Glu219 contributes to the a purine D-ribonucleoside binding site. Residue Ser238 participates in phosphate binding. Asn261 is an a purine D-ribonucleoside binding site. Ser275 carries the phosphoserine modification.

This sequence belongs to the PNP/MTAP phosphorylase family.

It carries out the reaction a purine D-ribonucleoside + phosphate = a purine nucleobase + alpha-D-ribose 1-phosphate. It functions in the pathway purine metabolism; purine nucleoside salvage. Its function is as follows. The purine nucleoside phosphorylases catalyze the phosphorolytic breakdown of the N-glycosidic bond in the beta-(deoxy)ribonucleoside molecules, with the formation of the corresponding free purine bases and pentose-1-phosphate. Cleaves guanosine and inosine. The protein is Purine nucleoside phosphorylase (PNP1) of Saccharomyces cerevisiae (strain ATCC 204508 / S288c) (Baker's yeast).